The chain runs to 170 residues: Large ribosomal subunit protein uL10 (170 aa).

Belongs to the universal ribosomal protein uL10 family. In terms of assembly, part of the ribosomal stalk of the 50S ribosomal subunit. The N-terminus interacts with L11 and the large rRNA to form the base of the stalk. The C-terminus forms an elongated spine to which L12 dimers bind in a sequential fashion forming a multimeric L10(L12)X complex.

In terms of biological role, forms part of the ribosomal stalk, playing a central role in the interaction of the ribosome with GTP-bound translation factors. In Fusobacterium nucleatum subsp. nucleatum (strain ATCC 25586 / DSM 15643 / BCRC 10681 / CIP 101130 / JCM 8532 / KCTC 2640 / LMG 13131 / VPI 4355), this protein is Large ribosomal subunit protein uL10.